The sequence spans 462 residues: L-seryl-tRNA(Sec) selenium transferase (462 aa).

Lys-294 carries the post-translational modification N6-(pyridoxal phosphate)lysine.

The protein belongs to the SelA family. In terms of assembly, homodecamer; pentamer of dimers. Binds only one seryl-tRNA(Sec) per dimer. The cofactor is pyridoxal 5'-phosphate.

It is found in the cytoplasm. It carries out the reaction L-seryl-tRNA(Sec) + selenophosphate + H(+) = L-selenocysteinyl-tRNA(Sec) + phosphate. The protein operates within aminoacyl-tRNA biosynthesis; selenocysteinyl-tRNA(Sec) biosynthesis; selenocysteinyl-tRNA(Sec) from L-seryl-tRNA(Sec) (bacterial route): step 1/1. Converts seryl-tRNA(Sec) to selenocysteinyl-tRNA(Sec) required for selenoprotein biosynthesis. The chain is L-seryl-tRNA(Sec) selenium transferase from Yersinia pseudotuberculosis serotype O:1b (strain IP 31758).